The following is a 459-amino-acid chain: uncharacterized protein (459 aa).

Residues 5–63 (PVEEGQKFPLTIRRMGINGEGIGYFKKAVVFVPGAITGEEVVVEAVKVRDRFTEAKLNK) enclose the TRAM domain. 4 residues coordinate [4Fe-4S] cluster: Cys76, Cys82, Cys85, and Cys166. S-adenosyl-L-methionine-binding residues include Gln290, Tyr319, Asp340, and Asp388. Cys415 (nucleophile) is an active-site residue.

This sequence belongs to the class I-like SAM-binding methyltransferase superfamily. RNA M5U methyltransferase family.

This is an uncharacterized protein from Listeria monocytogenes serotype 4b (strain F2365).